The sequence spans 54 residues: Movement protein p6 (54 aa).

Over 1–10 (MDCVLRSYLL) the chain is Lumenal. Residues 11 to 31 (LAFGFLICLFLFCLVVFIWFV) form a helical membrane-spanning segment. Residues 32 to 54 (YKQILFRTTAQSNEARHNHSTVV) are Cytoplasmic-facing.

As to quaternary structure, homodimer; disulfide-linked.

It is found in the host rough endoplasmic reticulum membrane. Functionally, transports viral genome to neighboring plant cells directly through plasmosdesmata, without any budding. The movement protein allows efficient cell to cell propagation, by bypassing the host cell wall barrier. Two movement proteins, p6, Hsp70h and three structural proteins, CP, CPm, and P64 are essential for cell-cell movement. Also plays a role in virion formation. Together with CPm and p64, encapsidates the 5'-terminal portion of the viral genome. The protein is Movement protein p6 of Beet yellows virus (isolate Ukraine) (BYV).